Reading from the N-terminus, the 65-residue chain is Large ribosomal subunit protein bL35 (65 aa).

Positions 1–15 (MPKLKTRKAAAKRFR) are enriched in basic residues. A disordered region spans residues 1–28 (MPKLKTRKAAAKRFRQTGTGKFTRRKAN).

This sequence belongs to the bacterial ribosomal protein bL35 family.

The protein is Large ribosomal subunit protein bL35 of Cyanothece sp. (strain PCC 7425 / ATCC 29141).